A 335-amino-acid polypeptide reads, in one-letter code: GTPase Obg (335 aa).

The Obg domain maps to 1 to 159 (MKFVDSASIR…REIGLELSIM (159 aa)). One can recognise an OBG-type G domain in the interval 160–332 (ADIGLLGMPN…LVAGLFKLVK (173 aa)). GTP is bound by residues 166-173 (GMPNAGKS), 191-195 (FTTLH), 212-215 (DIPG), 282-285 (NKMD), and 313-315 (SAL). Mg(2+) contacts are provided by S173 and T193.

It belongs to the TRAFAC class OBG-HflX-like GTPase superfamily. OBG GTPase family. As to quaternary structure, monomer. It depends on Mg(2+) as a cofactor.

It localises to the cytoplasm. In terms of biological role, an essential GTPase which binds GTP, GDP and possibly (p)ppGpp with moderate affinity, with high nucleotide exchange rates and a fairly low GTP hydrolysis rate. Plays a role in control of the cell cycle, stress response, ribosome biogenesis and in those bacteria that undergo differentiation, in morphogenesis control. This Ruthia magnifica subsp. Calyptogena magnifica protein is GTPase Obg.